The chain runs to 107 residues: uncharacterized protein (107 aa).

The disordered stretch occupies residues 1–32 (MDSLASGRWRRRRTEELPAAGDAKRACRRSEP). A compositionally biased stretch (basic and acidic residues) spans 22–31 (DAKRACRRSE).

This is an uncharacterized protein from Mus musculus (Mouse).